A 285-amino-acid polypeptide reads, in one-letter code: Cold sensitive U2 snRNA suppressor 2 (285 aa).

The region spanning T45 to F130 is the RRM 1 domain. Positions G135–N149 are enriched in basic and acidic residues. Residues G135–P154 form a disordered region. The residue at position 163 (S163) is a Phosphoserine. In terms of domain architecture, RRM 2 spans R183–D265. Residues D265–I285 are disordered. Residues E276–I285 are compositionally biased toward acidic residues.

The protein belongs to the HTATSF1 family. Interacts with PRP11. Associates with the U2 snRNA.

U2 snRNP protein which helps to refold U2 into a structure favorable for its binding to SF3b and SF3a prior to spliceosome assembly. Mediates functional interactions between U2 RNA and PRP5. Enforces ATP dependence during formation of the prespliceosome by brokering an interaction between PRP5 and the U2 snRNP that depends on correct U2 RNA structure. The chain is Cold sensitive U2 snRNA suppressor 2 (CUS2) from Saccharomyces cerevisiae (strain ATCC 204508 / S288c) (Baker's yeast).